A 183-amino-acid polypeptide reads, in one-letter code: Translation initiation factor IF-3 (183 aa).

It belongs to the IF-3 family. In terms of assembly, monomer.

The protein localises to the cytoplasm. In terms of biological role, IF-3 binds to the 30S ribosomal subunit and shifts the equilibrium between 70S ribosomes and their 50S and 30S subunits in favor of the free subunits, thus enhancing the availability of 30S subunits on which protein synthesis initiation begins. The polypeptide is Translation initiation factor IF-3 (Pseudomonas entomophila (strain L48)).